A 293-amino-acid chain; its full sequence is MVRRQSAPRLEFEAAAIYEYPEHLRPFLSEAPALPGVYIFHSESDTLPLYIGKSVNIRSRVLSHLRTPDEAAMLRQARRISWICTAGEMGALLLEARLIKEQQPLFNKRLRRNRQLCSLQLSEQKIEVVSARSVDFSHEPNLFGLFANRRAALQSLQNLADEQKLCYGLLGLEPVSRGRACFRFALKRCAGACCGQETPQAHFLRLQASLERLRVVCWPWKGAIALKESRPQMTQFHIINNWLWLGAVPSLDEAATLVRTPAGFDQDGYKILCKPLMSGQYEIIELHTDCRQS.

The region spanning 33-108 is the GIY-YIG domain; that stretch reads ALPGVYIFHS…IKEQQPLFNK (76 aa).

Its function is as follows. Incises the DNA at the 3' side of a lesion during nucleotide excision repair. Incises the DNA farther away from the lesion than UvrC. Not able to incise the 5' site of a lesion. When a lesion remains because UvrC is not able to induce the 3' incision, Cho incises the DNA. Then UvrC makes the 5' incision. The combined action of Cho and UvrC broadens the substrate range of nucleotide excision repair. The polypeptide is Excinuclease cho (cho) (Salmonella typhi).